The sequence spans 409 residues: uncharacterized protein (409 aa).

Residues 3–162 (TDVRVLRQDD…DDVRLRYAVP (160 aa)) enclose the N-acetyltransferase domain. Residues 82 to 84 (VSV), 90 to 95 (RRGVLT), and 118 to 119 (SE) each bind acetyl-CoA. Tyr123 (proton donor) is an active-site residue. The active-site Proton acceptor; via carboxylate is Phe409.

The protein belongs to the acetyltransferase Eis family. As to quaternary structure, homohexamer; trimer of dimers.

This is an uncharacterized protein from Streptomyces avermitilis (strain ATCC 31267 / DSM 46492 / JCM 5070 / NBRC 14893 / NCIMB 12804 / NRRL 8165 / MA-4680).